A 756-amino-acid polypeptide reads, in one-letter code: 5-methyltetrahydropteroyltriglutamate--homocysteine methyltransferase (756 aa).

Residues 16–19 (RELK) and lysine 116 each bind 5-methyltetrahydropteroyltri-L-glutamate. L-homocysteine contacts are provided by residues 435-437 (IGS) and glutamate 488. L-methionine contacts are provided by residues 435 to 437 (IGS) and glutamate 488. 5-methyltetrahydropteroyltri-L-glutamate is bound by residues 519-520 (RC) and tryptophan 565. Position 603 (aspartate 603) interacts with L-homocysteine. L-methionine is bound at residue aspartate 603. Residue glutamate 609 coordinates 5-methyltetrahydropteroyltri-L-glutamate. The Zn(2+) site is built by histidine 645, cysteine 647, and glutamate 669. The active-site Proton donor is the histidine 698. Cysteine 730 serves as a coordination point for Zn(2+).

The protein belongs to the vitamin-B12 independent methionine synthase family. Zn(2+) is required as a cofactor.

It carries out the reaction 5-methyltetrahydropteroyltri-L-glutamate + L-homocysteine = tetrahydropteroyltri-L-glutamate + L-methionine. It functions in the pathway amino-acid biosynthesis; L-methionine biosynthesis via de novo pathway; L-methionine from L-homocysteine (MetE route): step 1/1. Its function is as follows. Catalyzes the transfer of a methyl group from 5-methyltetrahydrofolate to homocysteine resulting in methionine formation. This chain is 5-methyltetrahydropteroyltriglutamate--homocysteine methyltransferase, found in Marinobacter nauticus (strain ATCC 700491 / DSM 11845 / VT8) (Marinobacter aquaeolei).